A 113-amino-acid polypeptide reads, in one-letter code: Nascent polypeptide-associated complex protein (113 aa).

Positions 5–73 constitute an NAC-A/B domain; that stretch reads GMNPAKMKQM…AKEVPKSLEI (69 aa).

This sequence belongs to the NAC-alpha family. Homodimer. Interacts with the ribosome. Binds ribosomal RNA.

Contacts the emerging nascent chain on the ribosome. The sequence is that of Nascent polypeptide-associated complex protein from Methanosarcina acetivorans (strain ATCC 35395 / DSM 2834 / JCM 12185 / C2A).